A 305-amino-acid chain; its full sequence is MLKQRTIKSLVKTVGIGLHSGRKVTLTLRPAPADTGIVFTRVDLPEAVEIHAAASAIGDTRLASVLQKDGARVSTVEHLMSACAGLGVDNLYVDVDAEEIPIMDGSAASFVFLLQSAGMEEQPAAKRFIRVKKAVEVRDGDKLARLEPFFGFKLAFTIDFRHPAVDKTGQTFTIDFADTSYVREIARARTFGFAHEVEALREMGLARGGSLDNAIVLDEHRMLNNEELRYGDEFVRHKILDAIGDLYVIGHPLIASYVAHKSGHGMNNQLLRALLADQEAYEFVTFDKVEEAPVAFLPQAQPAFA.

The Zn(2+) site is built by His-78, His-237, and Asp-241. His-264 acts as the Proton donor in catalysis.

This sequence belongs to the LpxC family. The cofactor is Zn(2+).

It carries out the reaction a UDP-3-O-[(3R)-3-hydroxyacyl]-N-acetyl-alpha-D-glucosamine + H2O = a UDP-3-O-[(3R)-3-hydroxyacyl]-alpha-D-glucosamine + acetate. It functions in the pathway glycolipid biosynthesis; lipid IV(A) biosynthesis; lipid IV(A) from (3R)-3-hydroxytetradecanoyl-[acyl-carrier-protein] and UDP-N-acetyl-alpha-D-glucosamine: step 2/6. Functionally, catalyzes the hydrolysis of UDP-3-O-myristoyl-N-acetylglucosamine to form UDP-3-O-myristoylglucosamine and acetate, the committed step in lipid A biosynthesis. The polypeptide is UDP-3-O-acyl-N-acetylglucosamine deacetylase (Cupriavidus metallidurans (strain ATCC 43123 / DSM 2839 / NBRC 102507 / CH34) (Ralstonia metallidurans)).